The sequence spans 250 residues: N-acyl homoserine lactonase (250 aa).

Zn(2+) contacts are provided by H104, H106, D108, H109, H169, D191, and H235.

The protein belongs to the metallo-beta-lactamase superfamily. As to quaternary structure, monomer. Zn(2+) is required as a cofactor.

It carries out the reaction an N-acyl-L-homoserine lactone + H2O = an N-acyl-L-homoserine + H(+). The chain is N-acyl homoserine lactonase from Bacillus cereus.